The primary structure comprises 359 residues: Phospho-N-acetylmuramoyl-pentapeptide-transferase (359 aa).

The next 10 membrane-spanning stretches (helical) occupy residues 27–47, 73–93, 94–114, 134–154, 166–186, 197–217, 233–253, 261–281, 286–306, and 336–356; these read IYAL…MMRW, TMGG…WADL, TNIY…VGFV, LLGQ…QPAY, FTPD…IGAS, GLAI…IYIA, GVGE…GFLW, LFMG…IAVL, LLLI…IMQV, and KIVI…LSTL.

The protein belongs to the glycosyltransferase 4 family. MraY subfamily. Mg(2+) is required as a cofactor.

It is found in the cell inner membrane. It catalyses the reaction UDP-N-acetyl-alpha-D-muramoyl-L-alanyl-gamma-D-glutamyl-meso-2,6-diaminopimeloyl-D-alanyl-D-alanine + di-trans,octa-cis-undecaprenyl phosphate = di-trans,octa-cis-undecaprenyl diphospho-N-acetyl-alpha-D-muramoyl-L-alanyl-D-glutamyl-meso-2,6-diaminopimeloyl-D-alanyl-D-alanine + UMP. Its pathway is cell wall biogenesis; peptidoglycan biosynthesis. Catalyzes the initial step of the lipid cycle reactions in the biosynthesis of the cell wall peptidoglycan: transfers peptidoglycan precursor phospho-MurNAc-pentapeptide from UDP-MurNAc-pentapeptide onto the lipid carrier undecaprenyl phosphate, yielding undecaprenyl-pyrophosphoryl-MurNAc-pentapeptide, known as lipid I. This is Phospho-N-acetylmuramoyl-pentapeptide-transferase from Maridesulfovibrio salexigens (strain ATCC 14822 / DSM 2638 / NCIMB 8403 / VKM B-1763) (Desulfovibrio salexigens).